We begin with the raw amino-acid sequence, 2157 residues long: Polyketide synthase 2 (2157 aa).

Residues 7–244 (FIFGDQTGGF…IPIPIWAPYH (238 aa)) form an N-terminal acylcarrier protein transacylase domain (SAT) region. Residues 374–807 (DSKIAIIGMS…GGNSALLLED (434 aa)) form the Ketosynthase family 3 (KS3) domain. Active-site for beta-ketoacyl synthase activity residues include Cys546, His681, and His723. The tract at residues 908–1213 (GFVFSGQGAQ…ASLHRKDDGW (306 aa)) is malonyl-CoA:ACP transacylase (MAT) domain. Ser998 acts as the For acyl/malonyl transferase activity in catalysis. The interval 1290–1605 (TSSVQKIIRQ…RSLLNKVLPP (316 aa)) is product template (PT) domain. The tract at residues 1294–1428 (QKIIRQTDGP…CLLRFADPTS (135 aa)) is N-terminal hotdog fold. Residues 1294-1600 (QKIIRQTDGP…FLGMSRSLLN (307 aa)) enclose the PKS/mFAS DH domain. The active-site Proton acceptor; for dehydratase activity is the His1327. A C-terminal hotdog fold region spans residues 1455–1600 (TDSLLSRGIV…FLGMSRSLLN (146 aa)). Catalysis depends on Asp1514, which acts as the Proton donor; for dehydratase activity. The disordered stretch occupies residues 1626–1652 (AASAKDTERRPLDIPTRAQRQPSSAQT). Residues 1643-1652 (AQRQPSSAQT) show a composition bias toward polar residues. A Carrier 1 domain is found at 1649-1726 (SAQTGTMGRI…ELKAFLGADQ (78 aa)). The residue at position 1686 (Ser1686) is an O-(pantetheine 4'-phosphoryl)serine. A disordered region spans residues 1733-1762 (ACESSNGQHTPQTSDKGSGTLAVQKTDDDT). Residues 1735 to 1755 (ESSNGQHTPQTSDKGSGTLAV) are compositionally biased toward polar residues. The region spanning 1765–1839 (DMTLNRVCAI…SLQKALCGSE (75 aa)) is the Carrier 2 domain. Ser1799 carries the O-(pantetheine 4'-phosphoryl)serine modification. The disordered stretch occupies residues 1840 to 1859 (AASNGAPEANETTPSSHRLE). The segment at 1875-2151 (ASPPHATSIL…MIEMGNLIGE (277 aa)) is thioesterase (TE) domain. Catalysis depends on Ser1981, which acts as the For thioesterase activity.

In terms of biological role, polyketide synthase; part of the Pks2 gene cluster that mediates the formation of infectious structures (appressoria), enabling these fungi to kill insects faster. The product of the Pks2 gene cluster is different from the one of Pks1 and has still not been identified. This is Polyketide synthase 2 from Metarhizium robertsii (strain ARSEF 23 / ATCC MYA-3075) (Metarhizium anisopliae (strain ARSEF 23)).